A 72-amino-acid chain; its full sequence is Crustacean hyperglycemic hormone (72 aa).

Gln1 carries the pyrrolidone carboxylic acid modification. Position 3 is a D-phenylalanine (Phe3). Intrachain disulfides connect Cys7–Cys43, Cys23–Cys39, and Cys26–Cys52. Val72 carries the post-translational modification Valine amide.

Produced by the medulla terminalis X-organ in the eyestalks and transported to the sinus gland where they are stored and released.

The protein localises to the secreted. Functionally, hormone found in the sinus gland of isopods and decapods which controls the blood sugar level. Has a secretagogue action over the amylase released from the midgut gland. May act as a stress hormone and may be involved in the control of molting and reproduction. The protein is Crustacean hyperglycemic hormone of Astacus astacus (Noble crayfish).